A 572-amino-acid polypeptide reads, in one-letter code: Glutamate--tRNA ligase (572 aa).

The 'HIGH' region motif lies at 107–117 (PNPDGAFHLGN).

This sequence belongs to the class-I aminoacyl-tRNA synthetase family. Glutamate--tRNA ligase type 2 subfamily.

It localises to the cytoplasm. It carries out the reaction tRNA(Glu) + L-glutamate + ATP = L-glutamyl-tRNA(Glu) + AMP + diphosphate. Functionally, catalyzes the attachment of glutamate to tRNA(Glu) in a two-step reaction: glutamate is first activated by ATP to form Glu-AMP and then transferred to the acceptor end of tRNA(Glu). This Pyrococcus furiosus (strain ATCC 43587 / DSM 3638 / JCM 8422 / Vc1) protein is Glutamate--tRNA ligase.